The chain runs to 502 residues: Protein Dok-7 (502 aa).

One can recognise a PH domain in the interval 4–109; the sequence is SVVVEGYARL…WDARLRYSLG (106 aa). One can recognise an IRS-type PTB domain in the interval 105–210; that stretch reads RYSLGEVHRF…RGISPTRGPF (106 aa). Disordered regions lie at residues 210-232, 249-279, 291-358, and 418-482; these read FGLRPVLPDPSTSETSSEERLNH, STASYCPSAGGDDRSISGSSDTSDTSHSDCS, TSIQ…GSFS, and EVGG…GHPG. 2 stretches are compositionally biased toward low complexity: residues 264–279 and 301–316; these read ISGSSDTSDTSHSDCS and AGAKAAAQSAEKPLPS. The segment covering 336-346 has biased composition (polar residues); the sequence is GRQSSSDSGIA. Low complexity predominate over residues 347-358; that stretch reads TGSHSSYSGSFS. Residues 459–473 show a composition bias toward basic and acidic residues; it reads PNEHFRSPSESKKSS.

The protein resides in the cell membrane. The protein localises to the synapse. In terms of biological role, probable muscle-intrinsic activator of MUSK that plays an essential role in neuromuscular synaptogenesis. Acts in aneural activation of MUSK and subsequent acetylcholine receptor (AchR) clustering in myotubes. The protein is Protein Dok-7 (dok7) of Takifugu rubripes (Japanese pufferfish).